Here is a 304-residue protein sequence, read N- to C-terminus: Probable 5-dehydro-4-deoxyglucarate dehydratase (304 aa).

The protein belongs to the DapA family.

The catalysed reaction is 5-dehydro-4-deoxy-D-glucarate + H(+) = 2,5-dioxopentanoate + CO2 + H2O. The protein operates within carbohydrate acid metabolism; D-glucarate degradation; 2,5-dioxopentanoate from D-glucarate: step 2/2. This is Probable 5-dehydro-4-deoxyglucarate dehydratase from Methylobacterium radiotolerans (strain ATCC 27329 / DSM 1819 / JCM 2831 / NBRC 15690 / NCIMB 10815 / 0-1).